Consider the following 1073-residue polypeptide: Lon protease homolog, mitochondrial (1073 aa).

The transit peptide at Met-1–Asn-27 directs the protein to the mitochondrion. Basic and acidic residues-rich tracts occupy residues Phe-69 to Ile-107 and Tyr-113 to Pro-123. Residues Phe-69–Ala-173 form a disordered region. The span at Ser-132–Asn-150 shows a compositional bias: low complexity. The span at Asp-158 to Phe-167 shows a compositional bias: basic and acidic residues. Residues Pro-177 to Ala-395 form the Lon N-terminal domain. Gly-543–Thr-550 provides a ligand contact to ATP. Over residues Ser-775 to Ala-785 the composition is skewed to basic and acidic residues. A disordered region spans residues Ser-775–Ile-821. Positions Ile-790–Thr-805 are enriched in polar residues. The segment covering Glu-806–Ile-821 has biased composition (basic and acidic residues). The Lon proteolytic domain occupies Thr-856–Gly-1044. Residues Ser-950 and Lys-993 contribute to the active site.

Belongs to the peptidase S16 family. In terms of assembly, homohexamer or homoheptamer. Organized in a ring with a central cavity.

It localises to the mitochondrion matrix. The catalysed reaction is Hydrolysis of proteins in presence of ATP.. Functionally, ATP-dependent serine protease that mediates the selective degradation of misfolded, unassembled or oxidatively damaged polypeptides as well as certain short-lived regulatory proteins in the mitochondrial matrix. May also have a chaperone function in the assembly of inner membrane protein complexes. Participates in the regulation of mitochondrial gene expression and in the maintenance of the integrity of the mitochondrial genome. Binds to mitochondrial DNA in a site-specific manner. The protein is Lon protease homolog, mitochondrial of Candida dubliniensis (strain CD36 / ATCC MYA-646 / CBS 7987 / NCPF 3949 / NRRL Y-17841) (Yeast).